The sequence spans 193 residues: Fra a 1-associated protein (193 aa).

The tract at residues methionine 1–aspartate 27 is disordered.

Interacts with FRAA1E, FRAA2 and FRAA3.

The sequence is that of Fra a 1-associated protein from Fragaria ananassa (Strawberry).